Here is a 28-residue protein sequence, read N- to C-terminus: Conotoxin as14b (28 aa).

2 disulfide bridges follow: Cys-7-Cys-27 and Cys-11-Cys-23.

This sequence belongs to the conotoxin L superfamily. In terms of tissue distribution, expressed by the venom duct.

It is found in the secreted. In terms of biological role, in vivo, intracranial injection elicits scratching and grooming activity in mice, and causes body and rear limb extension and tail curling immediately upon injection. This chain is Conotoxin as14b, found in Conus cancellatus (Cancellate cone).